Reading from the N-terminus, the 622-residue chain is WD repeat-containing protein 70 (622 aa).

Residues 36 to 55 (RTAVERSKQTLEAREKEEQL) show a composition bias toward basic and acidic residues. The segment at 36–141 (RTAVERSKQT…DNPVKDIPDS (106 aa)) is disordered. A compositionally biased stretch (low complexity) spans 67 to 84 (SSSGQKKTKASGSSSGSE). The segment covering 120–132 (SDDEDDEEHEDDD) has biased composition (acidic residues). WD repeat units follow at residues 148 to 187 (HGTKTVSALGLDPSGARLVTGGYDYDVRFWDFAGMDASLQ), 195 to 236 (CECH…ECVK), 249 to 289 (GHTA…KHKG), 298 to 337 (GKPVIPTCCTYSRDGKFIAAGCQDGSIQIWDRNMSVHTKF), 344 to 383 (TPGTDTSCVTFSYGGNVLATRGGDDTLKTWDIRKFKNPLN), 387 to 434 (GLEN…KIYE), and 437 to 476 (VTEASVVRCLWHPKLNQIMVGTGNGLAKVYYDPNRSQRGA). Positions 508 to 533 (REPRQRSTRKQLEKDRLDPVKSHKPE) are enriched in basic and acidic residues. Disordered stretches follow at residues 508-549 (REPR…GTHG) and 602-622 (AEVDSDEEEPDNEPEWKKRKI). Positions 539 to 549 (PGRGGRVGTHG) are enriched in gly residues. Over residues 604 to 614 (VDSDEEEPDNE) the composition is skewed to acidic residues.

It belongs to the WD repeat GAD-1 family.

This Xenopus laevis (African clawed frog) protein is WD repeat-containing protein 70 (wdr70).